Here is a 328-residue protein sequence, read N- to C-terminus: Stress response kinase A (328 aa).

The Proton acceptor role is filled by Asp-201. Positions 206 and 217 each coordinate Mg(2+). The active site involves Asp-217.

The protein belongs to the SrkA/RdoA protein kinase family. As to quaternary structure, monomer. Mg(2+) is required as a cofactor.

It is found in the cytoplasm. The catalysed reaction is L-seryl-[protein] + ATP = O-phospho-L-seryl-[protein] + ADP + H(+). The enzyme catalyses L-threonyl-[protein] + ATP = O-phospho-L-threonyl-[protein] + ADP + H(+). In terms of biological role, a protein kinase that phosphorylates Ser and Thr residues. Probably acts to suppress the effects of stress linked to accumulation of reactive oxygen species. Probably involved in the extracytoplasmic stress response. The sequence is that of Stress response kinase A from Escherichia coli O157:H7.